The primary structure comprises 122 residues: Large ribosomal subunit protein uL14 (122 aa).

This sequence belongs to the universal ribosomal protein uL14 family. Part of the 50S ribosomal subunit. Forms a cluster with proteins L3 and L19. In the 70S ribosome, L14 and L19 interact and together make contacts with the 16S rRNA in bridges B5 and B8.

In terms of biological role, binds to 23S rRNA. Forms part of two intersubunit bridges in the 70S ribosome. The polypeptide is Large ribosomal subunit protein uL14 (Campylobacter jejuni subsp. jejuni serotype O:6 (strain 81116 / NCTC 11828)).